The chain runs to 273 residues: Proteasome subunit alpha (273 aa).

The tract at residues 231–273 (DDGAAGQPPSSSDTDTSAAEARKPTASAGSADLEGPEPERPDS) is disordered. Low complexity predominate over residues 238–249 (PPSSSDTDTSAA).

It belongs to the peptidase T1A family. The 20S proteasome core is composed of 14 alpha and 14 beta subunits that assemble into four stacked heptameric rings, resulting in a barrel-shaped structure. The two inner rings, each composed of seven catalytic beta subunits, are sandwiched by two outer rings, each composed of seven alpha subunits. The catalytic chamber with the active sites is on the inside of the barrel. Has a gated structure, the ends of the cylinder being occluded by the N-termini of the alpha-subunits. Is capped by the proteasome-associated ATPase, ARC.

Its subcellular location is the cytoplasm. It functions in the pathway protein degradation; proteasomal Pup-dependent pathway. Its activity is regulated as follows. The formation of the proteasomal ATPase ARC-20S proteasome complex, likely via the docking of the C-termini of ARC into the intersubunit pockets in the alpha-rings, may trigger opening of the gate for substrate entry. Interconversion between the open-gate and close-gate conformations leads to a dynamic regulation of the 20S proteasome proteolysis activity. Functionally, component of the proteasome core, a large protease complex with broad specificity involved in protein degradation. This Salinispora arenicola (strain CNS-205) protein is Proteasome subunit alpha.